The sequence spans 347 residues: Melanoma-associated antigen B10 (347 aa).

The segment covering 1-18 (MPRGQKSKLRAREKRRQA) has biased composition (basic residues). 2 disordered regions span residues 1–20 (MPRGQKSKLRAREKRRQARG) and 56–92 (GASNNPHGLREAQSTSTSATAASHTRHPEGVNDQMEE). The segment covering 67–78 (AQSTSTSATAAS) has biased composition (low complexity). The segment covering 81–92 (RHPEGVNDQMEE) has biased composition (basic and acidic residues). The region spanning 111–310 (VDEKVIILVH…SEFSNWYTEA (200 aa)) is the MAGE domain. Positions 328 to 347 (VSATAGARSKVKSSKSSQLQ) are disordered.

The sequence is that of Melanoma-associated antigen B10 (MAGEB10) from Homo sapiens (Human).